The chain runs to 31 residues: Phalloidin proprotein (31 aa).

A propeptide spanning residues 1-10 is cleaved from the precursor; the sequence is MSDINATRLP. Positions 11–17 form a cross-link, cyclopeptide (Ala-Pro); sequence AWLATCP. Positions 12 to 16 form a cross-link, 2'-cysteinyl-6'-hydroxytryptophan sulfoxide (Trp-Cys); the sequence is WLATC. Positions 18–31 are excised as a propeptide; that stretch reads CAGDDVNPLLTRGE.

The protein belongs to the MSDIN fungal toxin family. Processed by the macrocyclase-peptidase enzyme POPB to yield a toxic cyclic heptapeptide. POPB first removes 10 residues from the N-terminus. Conformational trapping of the remaining peptide forces the enzyme to release this intermediate rather than proceed to macrocyclization. The enzyme rebinds the remaining peptide in a different conformation and catalyzes macrocyclization of the N-terminal 7 residues.

Its function is as follows. Major toxin that belongs to the bicyclic heptapeptides called phallotoxins. Although structurally related to amatoxins, phallotoxins have a different mode of action, which is the stabilization of F-actin. Phallotoxins are poisonous when administered parenterally, but not orally because of poor absorption. This chain is Phalloidin proprotein, found in Amanita ocreata (Western North American destroying angel).